Consider the following 152-residue polypeptide: Ribosome maturation factor RimP (152 aa).

It belongs to the RimP family.

It is found in the cytoplasm. Required for maturation of 30S ribosomal subunits. The polypeptide is Ribosome maturation factor RimP (Rubrobacter xylanophilus (strain DSM 9941 / JCM 11954 / NBRC 16129 / PRD-1)).